The primary structure comprises 229 residues: Aminodeoxyfutalosine nucleosidase (229 aa).

The Proton acceptor role is filled by glutamate 13. Substrate-binding positions include glycine 79, isoleucine 153, and 173–174; that span reads ME. Aspartate 197 functions as the Proton donor in the catalytic mechanism.

Belongs to the PNP/UDP phosphorylase family. In terms of assembly, homodimer.

The enzyme catalyses 6-amino-6-deoxyfutalosine + H2O = dehypoxanthine futalosine + adenine. It carries out the reaction S-adenosyl-L-homocysteine + H2O = S-(5-deoxy-D-ribos-5-yl)-L-homocysteine + adenine. It catalyses the reaction S-methyl-5'-thioadenosine + H2O = 5-(methylsulfanyl)-D-ribose + adenine. The catalysed reaction is 5'-deoxyadenosine + H2O = 5-deoxy-D-ribose + adenine. Its pathway is quinol/quinone metabolism; menaquinone biosynthesis. The protein operates within amino-acid biosynthesis; L-methionine biosynthesis via salvage pathway; S-methyl-5-thio-alpha-D-ribose 1-phosphate from S-methyl-5'-thioadenosine (hydrolase route): step 1/2. Its function is as follows. Catalyzes the direct conversion of aminodeoxyfutalosine (AFL) into dehypoxanthine futalosine (DHFL) and adenine via the hydrolysis of the N-glycosidic bond; this reaction seems to represent an essential step in the menaquinone biosynthesis pathway in Campylobacter species. Also catalyzes the hydrolysis of 5'-methylthioadenosine (MTA) to adenine and 5'-methylthioribose. Can also probably use S-adenosylhomocysteine (SAH) as substrate, leading to adenine and S-ribosylhomocysteine. These other activities highlight the tremendous versatility of the enzyme, which also plays key roles in S-adenosylmethionine recycling and in the biosynthesis of the quorum-sensing molecule autoinducer-2. Shows negligible activity with futalosine (FL) as substrate. The polypeptide is Aminodeoxyfutalosine nucleosidase (pfs) (Campylobacter jejuni subsp. jejuni serotype O:2 (strain ATCC 700819 / NCTC 11168)).